An 89-amino-acid chain; its full sequence is Small ribosomal subunit protein uS14 (89 aa).

This sequence belongs to the universal ribosomal protein uS14 family. In terms of assembly, part of the 30S ribosomal subunit. Contacts proteins S3 and S10.

In terms of biological role, binds 16S rRNA, required for the assembly of 30S particles and may also be responsible for determining the conformation of the 16S rRNA at the A site. The protein is Small ribosomal subunit protein uS14 of Cytophaga hutchinsonii (strain ATCC 33406 / DSM 1761 / CIP 103989 / NBRC 15051 / NCIMB 9469 / D465).